Reading from the N-terminus, the 66-residue chain is Alpha-bisabolene synthase (66 aa).

The protein belongs to the terpene synthase family. Tpsd subfamily. Mn(2+) serves as cofactor. The cofactor is K(+).

It is found in the cytoplasm. It catalyses the reaction (2E,6E)-farnesyl diphosphate = (E,R)-alpha-bisabolene + diphosphate. It functions in the pathway terpene metabolism; oleoresin biosynthesis. Functionally, involved in defensive oleoresin formation in conifers in response to insect attack or other injury. Involved in sesquiterpene (C15) olefins biosynthesis. This is Alpha-bisabolene synthase from Pseudotsuga menziesii (Douglas-fir).